The following is a 163-amino-acid chain: Nodulin-13 (163 aa).

Kinetin-binding residues include Q68 and Y82. N(6)-dimethylallyladenine-binding residues include Q68 and Y82. The trans-zeatin site is built by Q68, Y82, and Y133.

Belongs to the BetVI family. Homodimer. As to expression, expressed in nodules, but not in leaves, stems, flowers and roots. Specifically located in the nodule cortex.

In terms of biological role, may be involved in nodule organogenesis rather in the processes related to nitrogen fixation or interactions with the bacteria. May regulate nodulation by controlling the levels of freely available cytokinins. The polypeptide is Nodulin-13 (N13) (Medicago truncatula (Barrel medic)).